Reading from the N-terminus, the 319-residue chain is Acetyl-coenzyme A carboxylase carboxyl transferase subunit alpha (319 aa).

Residues K39–E293 enclose the CoA carboxyltransferase C-terminal domain.

It belongs to the AccA family. In terms of assembly, acetyl-CoA carboxylase is a heterohexamer composed of biotin carboxyl carrier protein (AccB), biotin carboxylase (AccC) and two subunits each of ACCase subunit alpha (AccA) and ACCase subunit beta (AccD).

The protein resides in the cytoplasm. It catalyses the reaction N(6)-carboxybiotinyl-L-lysyl-[protein] + acetyl-CoA = N(6)-biotinyl-L-lysyl-[protein] + malonyl-CoA. It participates in lipid metabolism; malonyl-CoA biosynthesis; malonyl-CoA from acetyl-CoA: step 1/1. In terms of biological role, component of the acetyl coenzyme A carboxylase (ACC) complex. First, biotin carboxylase catalyzes the carboxylation of biotin on its carrier protein (BCCP) and then the CO(2) group is transferred by the carboxyltransferase to acetyl-CoA to form malonyl-CoA. The chain is Acetyl-coenzyme A carboxylase carboxyl transferase subunit alpha from Geobacter sulfurreducens (strain ATCC 51573 / DSM 12127 / PCA).